The primary structure comprises 745 residues: Receptor-type adenylate cyclase (745 aa).

At 1-341 (GELGQTDRFF…NEGALTRAQL (341 aa)) the chain is on the extracellular side. 4 N-linked (GlcNAc...) asparagine glycosylation sites follow: N15, N50, N189, and N312. A helical transmembrane segment spans residues 342–362 (IGVVVGTIFAVLLLLALGIVL). Over 363 to 745 (CVALRNTRDN…GSDEVARTCV (383 aa)) the chain is Cytoplasmic. The Guanylate cyclase domain occupies 384 to 538 (TLIFTDIESS…RTPNLAARTE (155 aa)). Mg(2+) contacts are provided by D389 and D432.

The protein belongs to the adenylyl cyclase class-3 family. Mg(2+) serves as cofactor.

The protein localises to the cell membrane. The enzyme catalyses ATP = 3',5'-cyclic AMP + diphosphate. Could act as a receptor for an unknown ligand. In Trypanosoma congolense, this protein is Receptor-type adenylate cyclase.